We begin with the raw amino-acid sequence, 135 residues long: Beta-galactoside-binding lectin (135 aa).

Serine 2 bears the N-acetylserine mark. The cysteines at positions 3 and 8 are disulfide-linked. The 131-residue stretch at 5–135 (GPVCTNLGLK…DFTLRSVSWE (131 aa)) folds into the Galectin domain. A beta-D-galactoside contacts are provided by residues 46 to 50 (HFNPR), histidine 54, asparagine 63, 70 to 73 (WGTE), and 70 to 76 (WGTEQRE).

Homodimer; disulfide-linked. In terms of assembly, (Microbial infection) Interacts with newcastle disease virus protein HN; this interaction inhibits viral adsorption rather than internalization. In terms of tissue distribution, mainly in the intestine (adult), mainly in the skin (embryo).

In terms of biological role, this protein binds beta-galactoside. May participate in host antiviral defense through specific interaction with glycans on the viral envelope glycoproteins. The protein is Beta-galactoside-binding lectin (CG-1B) of Gallus gallus (Chicken).